The sequence spans 886 residues: DNA double-strand break repair Rad50 ATPase (886 aa).

ATP contacts are provided by residues arginine 13, 33-39 (NGAGKSS), and glutamine 128. 2 coiled-coil regions span residues 183–360 (EQIK…LLET) and 400–433 (KEITEKLKKLIAKKSSLKTRGAQLKKAVEELKSA). The Zinc-hook domain maps to 392–489 (LSKAKEEEKE…RLEKVEKALE (98 aa)). Positions 437 and 440 each coordinate Zn(2+). Coiled-coil stretches lie at residues 489 to 518 (EKQETVLKYRQMVDELKALENELSSHDAEK) and 545 to 713 (SSAS…KKVE). 792–797 (FLSGGE) contributes to the ATP binding site.

It belongs to the SMC family. RAD50 subfamily. As to quaternary structure, homodimer. Forms a heterotetramer composed of two Mre11 subunits and two Rad50 subunits. It depends on Zn(2+) as a cofactor.

Part of the Rad50/Mre11 complex, which is involved in the early steps of DNA double-strand break (DSB) repair. The complex may facilitate opening of the processed DNA ends to aid in the recruitment of HerA and NurA. Rad50 controls the balance between DNA end bridging and DNA resection via ATP-dependent structural rearrangements of the Rad50/Mre11 complex. This Archaeoglobus fulgidus (strain ATCC 49558 / DSM 4304 / JCM 9628 / NBRC 100126 / VC-16) protein is DNA double-strand break repair Rad50 ATPase.